We begin with the raw amino-acid sequence, 89 residues long: Phosphocarrier protein HPr (89 aa).

The region spanning 1 to 88 is the HPr domain; it reads MLQRDTTIIN…ALIANRFGEG (88 aa). The Pros-phosphohistidine intermediate role is filled by His-15.

Belongs to the HPr family.

The protein resides in the cytoplasm. Functionally, general (non sugar-specific) component of the phosphoenolpyruvate-dependent sugar phosphotransferase system (sugar PTS). This major carbohydrate active-transport system catalyzes the phosphorylation of incoming sugar substrates concomitantly with their translocation across the cell membrane. The phosphoryl group from phosphoenolpyruvate (PEP) is transferred to the phosphoryl carrier protein HPr by enzyme I. Phospho-HPr then transfers it to the PTS EIIA domain. The polypeptide is Phosphocarrier protein HPr (phbH) (Cupriavidus necator (strain ATCC 17699 / DSM 428 / KCTC 22496 / NCIMB 10442 / H16 / Stanier 337) (Ralstonia eutropha)).